Here is a 472-residue protein sequence, read N- to C-terminus: Methanethiol oxidase (472 aa).

The protein belongs to the selenium-binding protein family.

The protein localises to the nucleus. It localises to the cytoplasm. It is found in the cytosol. Its subcellular location is the membrane. The catalysed reaction is methanethiol + O2 + H2O = hydrogen sulfide + formaldehyde + H2O2 + H(+). The protein operates within organosulfur degradation. Functionally, catalyzes the oxidation of methanethiol, an organosulfur compound known to be produced in substantial amounts by gut bacteria. Selenium-binding protein which may be involved in the sensing of reactive xenobiotics in the cytoplasm. May be involved in intra-Golgi protein transport. The protein is Methanethiol oxidase (selenbp1-b) of Xenopus laevis (African clawed frog).